A 297-amino-acid chain; its full sequence is uncharacterized protein (297 aa).

Residue glutamate 46 is part of the active site.

It belongs to the PhzF family. Homodimer and homotetramer.

This is an uncharacterized protein from Salmonella typhimurium (strain LT2 / SGSC1412 / ATCC 700720).